A 350-amino-acid polypeptide reads, in one-letter code: Histidinol-phosphate aminotransferase 1 (350 aa).

Lys-210 carries the post-translational modification N6-(pyridoxal phosphate)lysine.

The protein belongs to the class-II pyridoxal-phosphate-dependent aminotransferase family. Histidinol-phosphate aminotransferase subfamily. In terms of assembly, homodimer. Requires pyridoxal 5'-phosphate as cofactor.

It carries out the reaction L-histidinol phosphate + 2-oxoglutarate = 3-(imidazol-4-yl)-2-oxopropyl phosphate + L-glutamate. The protein operates within amino-acid biosynthesis; L-histidine biosynthesis; L-histidine from 5-phospho-alpha-D-ribose 1-diphosphate: step 7/9. This chain is Histidinol-phosphate aminotransferase 1, found in Pseudomonas fluorescens (strain ATCC BAA-477 / NRRL B-23932 / Pf-5).